Here is a 255-residue protein sequence, read N- to C-terminus: MLKVGIFGATGRVGKLLIEEILNHTHFNLSSVYVRNELQYSLPSSTMVTKDFEIFLQASDVIIDFSSPEATKALLEVALSYPKPLVIGTTGLDNDIQHLLENASHTMPILYATNMSKGVAMLNKIGALVAATLKESDIEICEIHHRYKKDAPSGTALTLAQSCAKARNLKLSDVRISGRNGNIGERNSNEIGVMSLRGGDVAGRHTIGFYLDGEYLELTHNATSRLTFAKGALDMAKWIVTQKNGLYSIEDALEI.

Residues 8-13 (GATGRV), 88-90 (GTT), and 112-115 (ATNM) contribute to the NAD(+) site. H144 functions as the Proton donor/acceptor in the catalytic mechanism. H145 is a binding site for (S)-2,3,4,5-tetrahydrodipicolinate. The active-site Proton donor is the K148. Residue 154 to 155 (GT) participates in (S)-2,3,4,5-tetrahydrodipicolinate binding.

The protein belongs to the DapB family.

It is found in the cytoplasm. The catalysed reaction is (S)-2,3,4,5-tetrahydrodipicolinate + NAD(+) + H2O = (2S,4S)-4-hydroxy-2,3,4,5-tetrahydrodipicolinate + NADH + H(+). It catalyses the reaction (S)-2,3,4,5-tetrahydrodipicolinate + NADP(+) + H2O = (2S,4S)-4-hydroxy-2,3,4,5-tetrahydrodipicolinate + NADPH + H(+). It participates in amino-acid biosynthesis; L-lysine biosynthesis via DAP pathway; (S)-tetrahydrodipicolinate from L-aspartate: step 4/4. Catalyzes the conversion of 4-hydroxy-tetrahydrodipicolinate (HTPA) to tetrahydrodipicolinate. The sequence is that of 4-hydroxy-tetrahydrodipicolinate reductase from Helicobacter hepaticus (strain ATCC 51449 / 3B1).